The following is a 466-amino-acid chain: Ribulose bisphosphate carboxylase large chain (466 aa).

An N6,N6,N6-trimethyllysine modification is found at Lys4. Residues Asn113 and Thr163 each contribute to the substrate site. Lys165 functions as the Proton acceptor in the catalytic mechanism. Substrate is bound at residue Lys167. 3 residues coordinate Mg(2+): Lys191, Asp193, and Glu194. Lys191 is modified (N6-carboxylysine). His284 (proton acceptor) is an active-site residue. 3 residues coordinate substrate: Arg285, His317, and Ser369.

The protein belongs to the RuBisCO large chain family. Type I subfamily. As to quaternary structure, heterohexadecamer of 8 large chains and 8 small chains; disulfide-linked. The disulfide link is formed within the large subunit homodimers. It depends on Mg(2+) as a cofactor. In terms of processing, the disulfide bond which can form in the large chain dimeric partners within the hexadecamer appears to be associated with oxidative stress and protein turnover.

The protein resides in the plastid. It localises to the chloroplast. It catalyses the reaction 2 (2R)-3-phosphoglycerate + 2 H(+) = D-ribulose 1,5-bisphosphate + CO2 + H2O. It carries out the reaction D-ribulose 1,5-bisphosphate + O2 = 2-phosphoglycolate + (2R)-3-phosphoglycerate + 2 H(+). Its function is as follows. RuBisCO catalyzes two reactions: the carboxylation of D-ribulose 1,5-bisphosphate, the primary event in carbon dioxide fixation, as well as the oxidative fragmentation of the pentose substrate in the photorespiration process. Both reactions occur simultaneously and in competition at the same active site. The chain is Ribulose bisphosphate carboxylase large chain from Ruttya fruticosa (African azalea).